Here is a 214-residue protein sequence, read N- to C-terminus: MSRLGIFGGTFDPIHHGHLIVAEVLKEELQLSRVLFLPAGQPPHKIGRPITPIAHRLAMLQLALQGNPHFAISYVDVRRPGPCYTVDSLTLLRREYSDAELVFLMGEDSLHDLPTWHEPNRIAELALLGVALRPGIEVDLQTIFARVPAARDRVILVPVPLIQIAASDIRRRVAEGRTIRYQVPLVVEEYIARHGLYRTVEAMMPTMTPRTSGV.

The protein belongs to the NadD family.

It carries out the reaction nicotinate beta-D-ribonucleotide + ATP + H(+) = deamido-NAD(+) + diphosphate. It participates in cofactor biosynthesis; NAD(+) biosynthesis; deamido-NAD(+) from nicotinate D-ribonucleotide: step 1/1. Catalyzes the reversible adenylation of nicotinate mononucleotide (NaMN) to nicotinic acid adenine dinucleotide (NaAD). This is Probable nicotinate-nucleotide adenylyltransferase from Thermomicrobium roseum (strain ATCC 27502 / DSM 5159 / P-2).